Reading from the N-terminus, the 496-residue chain is UDP-N-acetylmuramoyl-L-alanyl-D-glutamate--2,6-diaminopimelate ligase (496 aa).

Ser32 contributes to the UDP-N-acetyl-alpha-D-muramoyl-L-alanyl-D-glutamate binding site. 116–122 (GTNGKTT) serves as a coordination point for ATP. UDP-N-acetyl-alpha-D-muramoyl-L-alanyl-D-glutamate contacts are provided by residues 158–159 (TT), Ser185, Gln191, and Arg193. The residue at position 225 (Lys225) is an N6-carboxylysine. Meso-2,6-diaminopimelate is bound by residues Arg389, 413–416 (DNPR), Gly464, and Glu468. A Meso-diaminopimelate recognition motif motif is present at residues 413 to 416 (DNPR).

Belongs to the MurCDEF family. MurE subfamily. Mg(2+) serves as cofactor. Post-translationally, carboxylation is probably crucial for Mg(2+) binding and, consequently, for the gamma-phosphate positioning of ATP.

Its subcellular location is the cytoplasm. It catalyses the reaction UDP-N-acetyl-alpha-D-muramoyl-L-alanyl-D-glutamate + meso-2,6-diaminopimelate + ATP = UDP-N-acetyl-alpha-D-muramoyl-L-alanyl-gamma-D-glutamyl-meso-2,6-diaminopimelate + ADP + phosphate + H(+). It participates in cell wall biogenesis; peptidoglycan biosynthesis. Its function is as follows. Catalyzes the addition of meso-diaminopimelic acid to the nucleotide precursor UDP-N-acetylmuramoyl-L-alanyl-D-glutamate (UMAG) in the biosynthesis of bacterial cell-wall peptidoglycan. This is UDP-N-acetylmuramoyl-L-alanyl-D-glutamate--2,6-diaminopimelate ligase from Trichormus variabilis (strain ATCC 29413 / PCC 7937) (Anabaena variabilis).